Here is a 232-residue protein sequence, read N- to C-terminus: MSKLDDELSRIAHRANYLPQREAYERMRVERTGANDRLVAVQIALEDVDTQVFLLESEIDAMRQREDRDRLLLNSGATDAKQLSDLQPEFGTWQRRKNSLEDSLREVMKRRGELQDQLTAELGAIERMQTDLVGARQTLDVAFAEIDQVGQPHSSQCDVLIAELAPALSAPYERLCAGGGLGVGQLQGHRCGACRSEIGRGELSCISVDVDDEVVKYPESGAIQLLDKGFFQ.

Positions E89 to D140 form a coiled coil.

This is an uncharacterized protein from Mycobacterium leprae (strain TN).